Here is a 309-residue protein sequence, read N- to C-terminus: Porphobilinogen deaminase (309 aa).

Cys241 is modified (S-(dipyrrolylmethanemethyl)cysteine).

Belongs to the HMBS family. Monomer. Dipyrromethane is required as a cofactor.

It catalyses the reaction 4 porphobilinogen + H2O = hydroxymethylbilane + 4 NH4(+). It participates in porphyrin-containing compound metabolism; protoporphyrin-IX biosynthesis; coproporphyrinogen-III from 5-aminolevulinate: step 2/4. Functionally, tetrapolymerization of the monopyrrole PBG into the hydroxymethylbilane pre-uroporphyrinogen in several discrete steps. This Desulforudis audaxviator (strain MP104C) protein is Porphobilinogen deaminase.